Consider the following 727-residue polypeptide: Glycerol-3-phosphate dehydrogenase, mitochondrial (727 aa).

The transit peptide at 1–42 (MAFQKAVKRTVLVCGGALATVLGLSQCSHYRRKQVNLACLKA) directs the protein to the mitochondrion. Residue 71–99 (DILVIGGGATGSGCALDAVTRGLKTALVE) coordinates FAD. Phosphotyrosine is present on Tyr601. EF-hand domains are found at residues 623-658 (SDIERYTKRFHKFDADEKGFITIVDVQRVLENINVK) and 659-694 (IDENTLHEILSEVDLNKNGQVELNEFLQLMSAIQKG). Positions 672, 674, 676, 678, and 683 each coordinate Ca(2+).

Belongs to the FAD-dependent glycerol-3-phosphate dehydrogenase family. It depends on FAD as a cofactor.

Its subcellular location is the mitochondrion. It carries out the reaction a quinone + sn-glycerol 3-phosphate = dihydroxyacetone phosphate + a quinol. It participates in polyol metabolism; glycerol degradation via glycerol kinase pathway; glycerone phosphate from sn-glycerol 3-phosphate (aerobic route): step 1/1. Calcium-binding enhance the activity of the enzyme. Functionally, calcium-responsive mitochondrial glycerol-3-phosphate dehydrogenase which seems to be a key component of the pancreatic beta-cell glucose-sensing device. This is Glycerol-3-phosphate dehydrogenase, mitochondrial (GPD2) from Mesocricetus auratus (Golden hamster).